A 580-amino-acid polypeptide reads, in one-letter code: Dihydroxy-acid dehydratase (580 aa).

Mg(2+) is bound at residue Asp-95. Cys-136 serves as a coordination point for [2Fe-2S] cluster. Asp-137 and Lys-138 together coordinate Mg(2+). Lys-138 carries the post-translational modification N6-carboxylysine. Residue Cys-209 participates in [2Fe-2S] cluster binding. Glu-462 provides a ligand contact to Mg(2+). Ser-488 (proton acceptor) is an active-site residue.

The protein belongs to the IlvD/Edd family. In terms of assembly, homodimer. [2Fe-2S] cluster serves as cofactor. The cofactor is Mg(2+).

The catalysed reaction is (2R)-2,3-dihydroxy-3-methylbutanoate = 3-methyl-2-oxobutanoate + H2O. It carries out the reaction (2R,3R)-2,3-dihydroxy-3-methylpentanoate = (S)-3-methyl-2-oxopentanoate + H2O. It participates in amino-acid biosynthesis; L-isoleucine biosynthesis; L-isoleucine from 2-oxobutanoate: step 3/4. Its pathway is amino-acid biosynthesis; L-valine biosynthesis; L-valine from pyruvate: step 3/4. Functions in the biosynthesis of branched-chain amino acids. Catalyzes the dehydration of (2R,3R)-2,3-dihydroxy-3-methylpentanoate (2,3-dihydroxy-3-methylvalerate) into 2-oxo-3-methylpentanoate (2-oxo-3-methylvalerate) and of (2R)-2,3-dihydroxy-3-methylbutanoate (2,3-dihydroxyisovalerate) into 2-oxo-3-methylbutanoate (2-oxoisovalerate), the penultimate precursor to L-isoleucine and L-valine, respectively. The polypeptide is Dihydroxy-acid dehydratase (Leuconostoc mesenteroides subsp. mesenteroides (strain ATCC 8293 / DSM 20343 / BCRC 11652 / CCM 1803 / JCM 6124 / NCDO 523 / NBRC 100496 / NCIMB 8023 / NCTC 12954 / NRRL B-1118 / 37Y)).